Here is a 145-residue protein sequence, read N- to C-terminus: Small ribosomal subunit protein uS19 (145 aa).

Ala-2 is modified (N-acetylalanine). Lys-108 participates in a covalent cross-link: Glycyl lysine isopeptide (Lys-Gly) (interchain with G-Cter in SUMO2).

The protein belongs to the universal ribosomal protein uS19 family. Component of the small ribosomal subunit.

The protein localises to the cytoplasm. In terms of biological role, component of the small ribosomal subunit. The ribosome is a large ribonucleoprotein complex responsible for the synthesis of proteins in the cell. In Oryctolagus cuniculus (Rabbit), this protein is Small ribosomal subunit protein uS19 (RPS15).